The primary structure comprises 341 residues: Abnormal cell lineage protein 44 (341 aa).

The N-terminal stretch at 1–21 (MRALYFRTTTLSTFFILCSLA) is a signal peptide. 11 disulfides stabilise this stretch: Cys84-Cys95, Cys134-Cys142, Cys144-Cys158, Cys206-Cys220, Cys208-Cys215, Cys265-Cys292, Cys275-Cys287, Cys291-Cys331, Cys307-Cys322, Cys309-Cys319, and Cys314-Cys315. A lipid anchor (O-palmitoleoyl serine; by mom-1) is attached at Ser212. Asn279 is a glycosylation site (N-linked (GlcNAc...) asparagine).

The protein belongs to the Wnt family. In terms of processing, palmitoleoylation is required for efficient binding to frizzled receptors. Depalmitoleoylation leads to Wnt signaling pathway inhibition.

It localises to the secreted. The protein localises to the extracellular space. It is found in the extracellular matrix. In terms of biological role, ligand for members of the frizzled family of seven transmembrane receptors. Affects male tail development, vulval precursor cell specification and egg laying. Involved in morphogenesis by influencing polarity of asymmetric cell divisions of the B, U, and F cells in the male, and the T cell in males and hermaphrodites. Controls spindle orientation in B-gamma cell division during male copulatory spicule development. Involved in specification of the P7.p lineage during vulval development. Has a role in providing polarity and default lin-17 localization in axon development and positioning of neuromuscular synapses in DA9 regions by negatively regulating synaptogenesis. This Caenorhabditis briggsae protein is Abnormal cell lineage protein 44.